A 72-amino-acid polypeptide reads, in one-letter code: UPF0270 protein KPN78578_37030 (72 aa).

It belongs to the UPF0270 family.

This chain is UPF0270 protein KPN78578_37030, found in Klebsiella pneumoniae subsp. pneumoniae (strain ATCC 700721 / MGH 78578).